The sequence spans 92 residues: Mediator-associated protein 3 (92 aa).

Residues 13-70 enclose the DEK-C domain; sequence KDLRRKIKKTVKKILESSNLYKITEIKAREEASLKLDLDLSQDPYKVIVKEEVENFLE.

Associated with the Mediator complex.

The protein resides in the nucleus. This chain is Mediator-associated protein 3, found in Arabidopsis thaliana (Mouse-ear cress).